The primary structure comprises 642 residues: UvrABC system protein C (642 aa).

One can recognise a GIY-YIG domain in the interval Glu20–Ile97. Positions Lys207–Val242 constitute a UVR domain.

This sequence belongs to the UvrC family. As to quaternary structure, interacts with UvrB in an incision complex.

The protein resides in the cytoplasm. Functionally, the UvrABC repair system catalyzes the recognition and processing of DNA lesions. UvrC both incises the 5' and 3' sides of the lesion. The N-terminal half is responsible for the 3' incision and the C-terminal half is responsible for the 5' incision. The sequence is that of UvrABC system protein C from Rickettsia felis (strain ATCC VR-1525 / URRWXCal2) (Rickettsia azadi).